A 156-amino-acid chain; its full sequence is Terrestric acid biosynthesis cluster protein E (156 aa).

It functions in the pathway secondary metabolite biosynthesis. Functionally, part of the tra gene cluster that produces terrestric acid. The clavatol biosynthesis cluster cla and the terrestric acid cluster tra are both involved in the production of peniphenones and penilactones. The non-reducing PKS claF is responsible for the formation of clavatol from successive condensations of 3 malonyl-CoA units, presumably with a simple acetyl-CoA starter unit, and 2 methylation steps. The esterase claE probably collaborates with claF by catalyzing the hydrolysis of ACP-bound acyl intermediates to free the ACP from stalled intermediates. The clavatol oxidase claD then converts clavatol to hydroxyclavatol. Spontaneous dehydration of hydroxyclavatol leads to the accumulation of the highly active ortho-quinone methide. On the other hand, the PKS-NRPS hybrid traA is involved in the formation of crustosic acid, with the help of traB and traD. The polyketide synthase module (PKS) of traA is responsible for the synthesis of the polyketide backbone via the condensation of an acetyl-CoA starter unit with 3 malonyl-CoA units. The downstream nonribosomal peptide synthetase (NRPS) module then amidates the carboxyl end of the polyketide with L-malic acid. Because traA lacks a designated enoylreductase (ER) domain, the required activity is provided the enoyl reductase traG. Crustosic acid undergoes decarboxylation and isomerization to the terrestric acid, catalyzed by the 2-oxoglutarate-dependent dioxygenase traH. Both acids are further converted to the 2 gamma-butyrolactones (R)-5-methyltetronic acid and (S)-5-carboxylmethyltetronic acid, with involvement of the cytochrome P450 monooxygenase claJ. Spontaneous addition of the methide to these gamma-butyrolactones leads to peniphenone D and penilactone D, which undergo again stereospecific attacking by methide to give penilactones A and B. TraE seems not to be involved in the biosynthesis of peniphenones and penilactones in the conditions used to study its function. The chain is Terrestric acid biosynthesis cluster protein E from Penicillium crustosum (Blue mold fungus).